A 158-amino-acid polypeptide reads, in one-letter code: Coenzyme F420 hydrogenase subunit delta (158 aa).

It belongs to the peptidase A31 family.

The chain is Coenzyme F420 hydrogenase subunit delta (frhD) from Methanothermobacter thermautotrophicus (strain ATCC 29096 / DSM 1053 / JCM 10044 / NBRC 100330 / Delta H) (Methanobacterium thermoautotrophicum).